An 812-amino-acid chain; its full sequence is ATP-dependent DNA helicase PIF3 (812 aa).

Residue 247–254 coordinates ATP; that stretch reads GSAGTGKT. A DNA-binding region spans residues 741–761; the sequence is HLVYVACSRVRSMDQLIVRNV.

Belongs to the helicase family. PIF1 subfamily. As to quaternary structure, monomer. Mg(2+) is required as a cofactor.

It is found in the cytoplasm. It carries out the reaction Couples ATP hydrolysis with the unwinding of duplex DNA at the replication fork by translocating in the 5'-3' direction. This creates two antiparallel DNA single strands (ssDNA). The leading ssDNA polymer is the template for DNA polymerase III holoenzyme which synthesizes a continuous strand.. The catalysed reaction is ATP + H2O = ADP + phosphate + H(+). DNA-dependent ATPase and 5'-3' DNA helicase required for the maintenance of genome stability. In Trypanosoma brucei brucei (strain 927/4 GUTat10.1), this protein is ATP-dependent DNA helicase PIF3.